A 242-amino-acid chain; its full sequence is Lactate utilization protein A 1 (242 aa).

It belongs to the LutA/YkgE family.

Is involved in L-lactate degradation and allows cells to grow with lactate as the sole carbon source. This Bacillus anthracis (strain CDC 684 / NRRL 3495) protein is Lactate utilization protein A 1.